We begin with the raw amino-acid sequence, 192 residues long: Elongation factor P (192 aa).

Belongs to the elongation factor P family.

The protein resides in the cytoplasm. It functions in the pathway protein biosynthesis; polypeptide chain elongation. Involved in peptide bond synthesis. Stimulates efficient translation and peptide-bond synthesis on native or reconstituted 70S ribosomes in vitro. Probably functions indirectly by altering the affinity of the ribosome for aminoacyl-tRNA, thus increasing their reactivity as acceptors for peptidyl transferase. The chain is Elongation factor P from Borrelia duttonii (strain Ly).